The primary structure comprises 236 residues: Rab-like protein 3 (236 aa).

The small GTPase-like stretch occupies residues 1 to 235 (MASLDRVKVL…GGGALKNFHC (235 aa)). Residues 16-21 (GVGKSS), 148-150 (KLD), and 179-180 (DC) contribute to the GTP site.

It belongs to the small GTPase superfamily. Rab family. Homodimer. Interacts with GPR89; the interaction stabilizes GPR89. Interacts with RAP1GDS1.

Required for KRAS signaling regulation and modulation of cell proliferation. Regulator of KRAS prenylation, and probably prenylation of other small GTPases. Required for lymphocyte development and function. Not required for myeloid cell development. This is Rab-like protein 3 (Rabl3) from Mus musculus (Mouse).